The sequence spans 571 residues: Optineurin (571 aa).

Disordered regions lie at residues 1–32 (MSHQ…HPNL) and 100–144 (LSHE…DQLR). Positions 38–170 (EELLQQMKEL…VSELQLKLNS (133 aa)) form a coiled coil. Residues 58-209 (MKLNNQAMKG…GPTRTVSIGT (152 aa)) are interaction with Rab8. The segment covering 100–143 (LSHENEKLKEELGKLKGKSERSSEDPTDDSRLPRAEAEQEKDQL) has biased composition (basic and acidic residues). Positions 176–181 (DSFVEI) match the LIR motif. The residue at position 177 (Ser-177) is a Phosphoserine; by TBK1. Basic and acidic residues predominate over residues 186–197 (GEAEGSVKEIKH). Disordered regions lie at residues 186-210 (GEAE…IGTS) and 255-291 (VSDF…TVGS). Ser-198 is subject to Phosphoserine. The span at 201 to 210 (PTRTVSIGTS) shows a compositional bias: polar residues. A coiled-coil region spans residues 233 to 502 (CLREGNQKVE…LLKENDAFED (270 aa)). Composition is skewed to basic and acidic residues over residues 255-268 (VSDF…RSEI) and 275-286 (STEKENEEEKGP). The residue at position 336 (Ser-336) is a Phosphoserine. Positions 405 to 571 (TRKESEKVDR…LQIHVMDCII (167 aa)) are interaction with HD. Residues 406–514 (RKESEKVDRA…RQSLMEMQSR (109 aa)) form an interaction with MYO6 region. Residues 468–473 (DFHAER) carry the UBAN motif. A Phosphoserine modification is found at Ser-520. Residues 541–571 (QRNIPIHSCPKCGEVLPDIDTLQIHVMDCII) form a CCHC NOA-type zinc finger. 4 residues coordinate Zn(2+): Cys-549, Cys-552, His-565, and Cys-569.

As to quaternary structure, self-associates. Interacts with HD. Interacts with GTF3A. Interacts with MYO6. Interacts (via UBAN) with ubiquitinated TFRC. Interacts with GTP-bound Rab8 (RAB8A and/or RAB8B). Interacts with TBC1D17. Interacts with TBK1. Interacts with TRAF3. Binds to linear ubiquitin chains. Interacts with LC3 family members MAP1LC3A, MAP1LC3B, GABARAP, GABARAPL1 and GABARAPL2; OPTN phosphorylation increases the association (at least with MAP1LC3B). Interacts with RAB12; the interaction may be indirect. Interacts with TBK1; this interaction leads to the Golgi localization of TBK1 and its subsequent activation. Interacts with palmitoyltransferase ZDHHC17/HIP14; the interaction does not lead to palmitoylation of OPTN. Interacts with CYLD. Interacts with TOM1; the interaction is indirect and is mediated by MYO6, which acts as a bridge between TOM1 and OPTN. Interacts with USP12; the interaction is independent of USP12 deubiquitinase activity and may be involved in regulation of autophagic flux. In terms of processing, phosphorylated by TBK1, leading to restrict bacterial proliferation in case of infection. Present in aqueous humor of the eye (at protein level).

It is found in the cytoplasm. The protein localises to the perinuclear region. The protein resides in the golgi apparatus. It localises to the trans-Golgi network. Its subcellular location is the cytoplasmic vesicle. It is found in the autophagosome. The protein localises to the recycling endosome. Functionally, plays an important role in the maintenance of the Golgi complex, in membrane trafficking, in exocytosis, through its interaction with myosin VI and Rab8. Links myosin VI to the Golgi complex and plays an important role in Golgi ribbon formation. Negatively regulates the induction of IFNB in response to RNA virus infection. Plays a neuroprotective role in the eye and optic nerve. Probably part of the TNF-alpha signaling pathway that can shift the equilibrium toward induction of cell death. May act by regulating membrane trafficking and cellular morphogenesis via a complex that contains Rab8 and huntingtin (HD). Mediates the interaction of Rab8 with the probable GTPase-activating protein TBC1D17 during Rab8-mediated endocytic trafficking, such as that of transferrin receptor (TFRC/TfR); regulates Rab8 recruitment to tubules emanating from the endocytic recycling compartment. Autophagy receptor that interacts directly with both the cargo to become degraded and an autophagy modifier of the MAP1 LC3 family; targets ubiquitin-coated bacteria (xenophagy) and appears to function in the same pathway as SQSTM1 and CALCOCO2/NDP52. This is Optineurin (OPTN) from Macaca mulatta (Rhesus macaque).